We begin with the raw amino-acid sequence, 445 residues long: GTPase Der (445 aa).

2 EngA-type G domains span residues 3–167 and 180–353; these read PVIA…YAGQ and IKIA…AAAM. GTP-binding positions include 9–16, 56–60, 119–122, 186–193, 233–237, and 298–301; these read GRPNVGKS, DTGGF, NKAE, DTAGL, and NKWD. Positions 354-438 constitute a KH-like domain; that stretch reads AKLPTPKLTR…PLRIEFRSSN (85 aa).

This sequence belongs to the TRAFAC class TrmE-Era-EngA-EngB-Septin-like GTPase superfamily. EngA (Der) GTPase family. In terms of assembly, associates with the 50S ribosomal subunit.

Functionally, GTPase that plays an essential role in the late steps of ribosome biogenesis. This Burkholderia vietnamiensis (strain G4 / LMG 22486) (Burkholderia cepacia (strain R1808)) protein is GTPase Der.